We begin with the raw amino-acid sequence, 282 residues long: Acetylglutamate kinase (282 aa).

Residues G62–G63, R84, and N178 contribute to the substrate site. L-arginine-binding positions include K196, S214, and E266–S269.

In terms of assembly, homohexamer.

Its subcellular location is the cytoplasm. It catalyses the reaction N-acetyl-L-glutamate + ATP = N-acetyl-L-glutamyl 5-phosphate + ADP. The protein operates within amino-acid biosynthesis; L-arginine biosynthesis; N(2)-acetyl-L-ornithine from L-glutamate: step 2/4. With respect to regulation, allosterically inhibited by arginine. In terms of biological role, catalyzes the ATP-dependent phosphorylation of N-acetyl-L-glutamate. The polypeptide is Acetylglutamate kinase (Thermotoga maritima (strain ATCC 43589 / DSM 3109 / JCM 10099 / NBRC 100826 / MSB8)).